The following is a 1193-amino-acid chain: Structural maintenance of chromosomes protein 3 homolog (1193 aa).

31 to 38 (GFNGSGKS) is a binding site for ATP. An N6-acetyllysine modification is found at K101. 2 coiled-coil regions span residues 179–286 (SKKV…LNKT) and 332–483 (ILRV…EIIK). The region spanning 505-631 (ENILGFLIDN…VKSLESCENY (127 aa)) is the SMC hinge domain. Residues 665–993 (TVYNKLKELK…SHKNIKDMIQ (329 aa)) are a coiled coil.

It belongs to the SMC family. SMC3 subfamily. In terms of assembly, component of the cohesin complex. Post-translationally, acetylation at Lys-101 by ESCO1 is important for genome stability and S phase sister chromatid cohesion.

Its subcellular location is the nucleus. Central component of cohesin, a complex required for chromosome cohesion during the cell cycle. The cohesin complex may form a large proteinaceous ring within which sister chromatids can be trapped. At anaphase, the complex is cleaved and dissociates from chromatin, allowing sister chromatids to segregate. Cohesion is coupled to DNA replication and is involved in DNA repair. The cohesin complex also plays an important role in spindle pole assembly during mitosis and in chromosomes movement. This Plasmodium falciparum (isolate 3D7) protein is Structural maintenance of chromosomes protein 3 homolog.